The primary structure comprises 274 residues: Formamidopyrimidine-DNA glycosylase (274 aa).

P2 acts as the Schiff-base intermediate with DNA in catalysis. E3 (proton donor) is an active-site residue. Catalysis depends on K60, which acts as the Proton donor; for beta-elimination activity. DNA is bound by residues H93 and R112. The segment at 240 to 274 (FVYGRKGEPCKRCGTPIEKTVVAGRGTHYCPRCQR) adopts an FPG-type zinc-finger fold. Catalysis depends on R264, which acts as the Proton donor; for delta-elimination activity.

It belongs to the FPG family. In terms of assembly, monomer. Zn(2+) serves as cofactor.

It carries out the reaction Hydrolysis of DNA containing ring-opened 7-methylguanine residues, releasing 2,6-diamino-4-hydroxy-5-(N-methyl)formamidopyrimidine.. It catalyses the reaction 2'-deoxyribonucleotide-(2'-deoxyribose 5'-phosphate)-2'-deoxyribonucleotide-DNA = a 3'-end 2'-deoxyribonucleotide-(2,3-dehydro-2,3-deoxyribose 5'-phosphate)-DNA + a 5'-end 5'-phospho-2'-deoxyribonucleoside-DNA + H(+). Involved in base excision repair of DNA damaged by oxidation or by mutagenic agents. Acts as a DNA glycosylase that recognizes and removes damaged bases. Has a preference for oxidized purines, such as 7,8-dihydro-8-oxoguanine (8-oxoG). Has AP (apurinic/apyrimidinic) lyase activity and introduces nicks in the DNA strand. Cleaves the DNA backbone by beta-delta elimination to generate a single-strand break at the site of the removed base with both 3'- and 5'-phosphates. This Geobacillus kaustophilus (strain HTA426) protein is Formamidopyrimidine-DNA glycosylase.